Consider the following 275-residue polypeptide: Large ribosomal subunit protein uL2 (275 aa).

The segment at 223–275 (VAMNPVDHPHGGGEGRTGEAREPVSPWGTPSKGFKTRRNKRTNNMIVQRRKRK) is disordered. Basic and acidic residues predominate over residues 229–244 (DHPHGGGEGRTGEARE).

It belongs to the universal ribosomal protein uL2 family. Part of the 50S ribosomal subunit. Forms a bridge to the 30S subunit in the 70S ribosome.

Functionally, one of the primary rRNA binding proteins. Required for association of the 30S and 50S subunits to form the 70S ribosome, for tRNA binding and peptide bond formation. It has been suggested to have peptidyltransferase activity; this is somewhat controversial. Makes several contacts with the 16S rRNA in the 70S ribosome. The sequence is that of Large ribosomal subunit protein uL2 from Bordetella petrii (strain ATCC BAA-461 / DSM 12804 / CCUG 43448).